A 278-amino-acid polypeptide reads, in one-letter code: Protein FixR (278 aa).

40–64 (LLTGASRGIGHATAKLFSEAGWRII) contributes to the NAD(+) binding site. Residue serine 175 coordinates substrate. Catalysis depends on tyrosine 189, which acts as the Proton acceptor.

It belongs to the short-chain dehydrogenases/reductases (SDR) family.

The polypeptide is Protein FixR (fixR) (Bradyrhizobium diazoefficiens (strain JCM 10833 / BCRC 13528 / IAM 13628 / NBRC 14792 / USDA 110)).